The following is a 506-amino-acid chain: Lysine--tRNA ligase (506 aa).

Residues glutamate 415 and glutamate 422 each contribute to the Mg(2+) site.

Belongs to the class-II aminoacyl-tRNA synthetase family. Homodimer. The cofactor is Mg(2+).

The protein resides in the cytoplasm. It catalyses the reaction tRNA(Lys) + L-lysine + ATP = L-lysyl-tRNA(Lys) + AMP + diphosphate. The sequence is that of Lysine--tRNA ligase from Erwinia tasmaniensis (strain DSM 17950 / CFBP 7177 / CIP 109463 / NCPPB 4357 / Et1/99).